The primary structure comprises 206 residues: Large ribosomal subunit protein uL4 (206 aa).

Residues 43-78 (ARSGNRKQKDREEVKHTTKKPWRQKGTGRARAGMSS) form a disordered region. Positions 49 to 58 (KQKDREEVKH) are enriched in basic and acidic residues. A compositionally biased stretch (basic residues) spans 59-70 (TTKKPWRQKGTG).

This sequence belongs to the universal ribosomal protein uL4 family. Part of the 50S ribosomal subunit.

In terms of biological role, one of the primary rRNA binding proteins, this protein initially binds near the 5'-end of the 23S rRNA. It is important during the early stages of 50S assembly. It makes multiple contacts with different domains of the 23S rRNA in the assembled 50S subunit and ribosome. Its function is as follows. Forms part of the polypeptide exit tunnel. This Ralstonia nicotianae (strain ATCC BAA-1114 / GMI1000) (Ralstonia solanacearum) protein is Large ribosomal subunit protein uL4.